The chain runs to 975 residues: Cation-chloride cotransporter 1 (975 aa).

Disordered stretches follow at residues 1 to 29 (MDSGDIEEAGGNGEEEFRSGPRLGGSKYR) and 104 to 124 (EQIQAPSSPRDGEDISITQGH). Residues 1-132 (MDSGDIEEAG…GHPKPPALKM (132 aa)) lie on the Cytoplasmic side of the membrane. Residues 133 to 153 (GTMMGVFVPCLQNILGIIYYI) traverse the membrane as a helical segment. Residues 154-167 (RFTWIVGMAGIGQG) are Extracellular-facing. Residues 168–188 (LVLVFLCGLCTFLTTISLSAI) traverse the membrane as a helical segment. Over 189–214 (ATNGAMKGGGPYYLIGRALGPEVGIS) the chain is Cytoplasmic. The helical transmembrane segment at 215–235 (IGLCFFLGNAVAGALYVLGAV) threads the bilayer. The Extracellular segment spans residues 236 to 273 (ETFLKAFPAAGIFRETITKVNGTAVSESIQSPNSHDLQ). Residue N256 is glycosylated (N-linked (GlcNAc...) asparagine). The chain crosses the membrane as a helical span at residues 274–294 (VYGIVVTILLCFIVFGGVKMI). The Cytoplasmic portion of the chain corresponds to 295–296 (NR). Residues 297 to 317 (VAPAFLVPVLLSIFCIFIGIF) form a helical membrane-spanning segment. The Extracellular portion of the chain corresponds to 318–359 (LAKTDDPDNGITGLRLKSFKDNWGSAYQMTNDAGIPDPTGGT). Residues 360 to 380 (YWSFNELVGLFFPAVTGIMAG) form a helical membrane-spanning segment. Over 381-398 (SNRSASLKDTQKSIPVGT) the chain is Cytoplasmic. A helical transmembrane segment spans residues 399 to 419 (LAATLTTTSLYLISVLFFGAV). Topologically, residues 420–434 (ATRDKLLTDRLLTAT) are extracellular. Residues 435-455 (IAWPFPAIVHVGIILSTLGAA) form a helical membrane-spanning segment. Over 456–490 (LQSLTGAPRLLAAIANDDILPILNYFKVADTSEPH) the chain is Cytoplasmic. The chain crosses the membrane as a helical span at residues 491–511 (IATLFTAFICIGCVVIGNLDL). Topologically, residues 512-515 (ITPT) are extracellular. The chain crosses the membrane as a helical span at residues 516 to 536 (VTMFYLLCYSGVNLSCFLLDL). The Cytoplasmic portion of the chain corresponds to 537–544 (LDAPSWRP). Residues 545-565 (RWKYHHWSLSFVGASLCIVIM) form a helical membrane-spanning segment. Residues 566–571 (FLISWS) are Extracellular-facing. Residues 572-592 (FTVVAIALASLIYKYVGLKGK) traverse the membrane as a helical segment. The Cytoplasmic portion of the chain corresponds to 593–975 (AGDWGDGFKS…YHRDVVTLFT (383 aa)).

Belongs to the SLC12A transporter family. Expressed in young seedlings cotyledon tips, plant vasculature, root tips and axillary buds. Expressed in root vascular strand in the pericycle and other parenchyma cells bordering xylem vessels. Expressed in the xylem/symplast boundaries of rosette stems, rosette leaves and cauline leaves. Expressed in stipules, trichomes and hydathodes. Expressed in pollen grains.

The protein localises to the membrane. Cation/chloride cotransporter that mediates potassium-chloride and sodium-chloride cotransports. Involved in plant development and Cl(-) homeostasis. May be involved in long distance Cl(-) transport. Does not function as an H(+)-dependent cotransporter. The polypeptide is Cation-chloride cotransporter 1 (CCC1) (Arabidopsis thaliana (Mouse-ear cress)).